The chain runs to 590 residues: Protein ecdysoneless homolog (590 aa).

Residues 445–464 (EDFYGVKNSDTDTDSDSLAD) form a disordered region. Residues 455-464 (TDTDSDSLAD) are compositionally biased toward acidic residues.

It belongs to the ECD family.

It is found in the cytoplasm. It localises to the nucleus. Involved in the regulation of carbohydrate metabolism. May act as a transcription factor. The chain is Protein ecdysoneless homolog from Schizosaccharomyces pombe (strain 972 / ATCC 24843) (Fission yeast).